The chain runs to 526 residues: Peptide chain release factor 3 (526 aa).

The tr-type G domain maps to 9 to 277 (DKRRTFAIIS…GIVEWAPKPQ (269 aa)). GTP-binding positions include 18-25 (SHPDAGKT), 86-90 (DTPGH), and 140-143 (NKLD).

This sequence belongs to the TRAFAC class translation factor GTPase superfamily. Classic translation factor GTPase family. PrfC subfamily.

It localises to the cytoplasm. Increases the formation of ribosomal termination complexes and stimulates activities of RF-1 and RF-2. It binds guanine nucleotides and has strong preference for UGA stop codons. It may interact directly with the ribosome. The stimulation of RF-1 and RF-2 is significantly reduced by GTP and GDP, but not by GMP. This chain is Peptide chain release factor 3, found in Shewanella sediminis (strain HAW-EB3).